A 306-amino-acid chain; its full sequence is uncharacterized protein (306 aa).

The next 9 helical transmembrane spans lie at 13 to 33 (VLLS…FAFI), 53 to 73 (PLPM…FAWG), 86 to 106 (ITGL…IWAA), 112 to 132 (VGLT…IVPL), 147 to 167 (WGMM…GMLF), 177 to 197 (AFVS…VIAI), 214 to 234 (AGIA…AWLI), 246 to 268 (VSLI…VTFF), and 272 to 294 (VAVP…GYML).

Its subcellular location is the cell membrane. This is an uncharacterized protein from Bacillus subtilis (strain 168).